Consider the following 156-residue polypeptide: Small ribosomal subunit protein uS7 (156 aa).

The protein belongs to the universal ribosomal protein uS7 family. As to quaternary structure, part of the 30S ribosomal subunit. Contacts proteins S9 and S11.

In terms of biological role, one of the primary rRNA binding proteins, it binds directly to 16S rRNA where it nucleates assembly of the head domain of the 30S subunit. Is located at the subunit interface close to the decoding center, probably blocks exit of the E-site tRNA. The chain is Small ribosomal subunit protein uS7 from Mycobacterium bovis (strain ATCC BAA-935 / AF2122/97).